A 412-amino-acid chain; its full sequence is Multifunctional CCA protein (412 aa).

Residues glycine 8 and arginine 11 each contribute to the ATP site. CTP contacts are provided by glycine 8 and arginine 11. Mg(2+) contacts are provided by aspartate 21 and aspartate 23. Arginine 91, arginine 137, and arginine 140 together coordinate ATP. The CTP site is built by arginine 91, arginine 137, and arginine 140. The region spanning threonine 228 to tryptophan 329 is the HD domain.

This sequence belongs to the tRNA nucleotidyltransferase/poly(A) polymerase family. Bacterial CCA-adding enzyme type 1 subfamily. In terms of assembly, monomer. Can also form homodimers and oligomers. The cofactor is Mg(2+). Ni(2+) serves as cofactor.

It catalyses the reaction a tRNA precursor + 2 CTP + ATP = a tRNA with a 3' CCA end + 3 diphosphate. The catalysed reaction is a tRNA with a 3' CCA end + 2 CTP + ATP = a tRNA with a 3' CCACCA end + 3 diphosphate. Its function is as follows. Catalyzes the addition and repair of the essential 3'-terminal CCA sequence in tRNAs without using a nucleic acid template. Adds these three nucleotides in the order of C, C, and A to the tRNA nucleotide-73, using CTP and ATP as substrates and producing inorganic pyrophosphate. tRNA 3'-terminal CCA addition is required both for tRNA processing and repair. Also involved in tRNA surveillance by mediating tandem CCA addition to generate a CCACCA at the 3' terminus of unstable tRNAs. While stable tRNAs receive only 3'-terminal CCA, unstable tRNAs are marked with CCACCA and rapidly degraded. In Escherichia coli O1:K1 / APEC, this protein is Multifunctional CCA protein.